Here is a 215-residue protein sequence, read N- to C-terminus: Hibernation-associated plasma protein HP-25 (215 aa).

Positions 1-28 are cleaved as a signal peptide; the sequence is MPAQRGGALSMGAAGFWILVLSITSALA. The disordered stretch occupies residues 29–96; the sequence is DSNNQGNSEP…RPKSAFAVKL (68 aa). Pro residues-rich tracts occupy residues 39-51 and 60-77; these read CGPP…PGIP and LGPP…PQGP. In terms of domain architecture, Collagen-like spans 40–81; that stretch reads GPPGPPGPPGIPGFPGAPGALGPPGPPGVPGIPGPQGPPGDV. Positions 85–215 constitute a C1q domain; the sequence is SSRPKSAFAV…VFFGYLLYGK (131 aa). Residue asparagine 167 is glycosylated (N-linked (GlcNAc...) asparagine).

In terms of tissue distribution, plasma; synthesized in the liver.

The protein localises to the secreted. Functionally, plasma proteins HP-20, HP-25, HP-27 and HP-55 form a 140 kDa complex via disulfide bonds in the plasma and are hibernation specific. The polypeptide is Hibernation-associated plasma protein HP-25 (Tamias sibiricus (Siberian chipmunk)).